The sequence spans 132 residues: Venom CUB domain-containing protein 2 (132 aa).

A signal peptide spans 1–17 (MKTLFLAIALFSAVALA). Residues 22 to 129 (ESAELVPGGE…RGFVACKATA (108 aa)) enclose the CUB domain. Intrachain disulfides connect cysteine 66-cysteine 125 and cysteine 77-cysteine 94.

This sequence belongs to the venom CUB family. Expressed by the venom gland (posterior main gland) (at protein level).

It is found in the secreted. This chain is Venom CUB domain-containing protein 2, found in Platymeris rhadamanthus (Red spot assassin bug).